The following is a 345-amino-acid chain: Biotin synthase (345 aa).

The region spanning 49 to 276 (NQVQMSTLLS…ASFVRLSAGR (228 aa)) is the Radical SAM core domain. [4Fe-4S] cluster contacts are provided by cysteine 64, cysteine 68, and cysteine 71. [2Fe-2S] cluster contacts are provided by cysteine 108, cysteine 139, cysteine 199, and arginine 271.

Belongs to the radical SAM superfamily. Biotin synthase family. Homodimer. It depends on [4Fe-4S] cluster as a cofactor. The cofactor is [2Fe-2S] cluster.

The enzyme catalyses (4R,5S)-dethiobiotin + (sulfur carrier)-SH + 2 reduced [2Fe-2S]-[ferredoxin] + 2 S-adenosyl-L-methionine = (sulfur carrier)-H + biotin + 2 5'-deoxyadenosine + 2 L-methionine + 2 oxidized [2Fe-2S]-[ferredoxin]. It functions in the pathway cofactor biosynthesis; biotin biosynthesis; biotin from 7,8-diaminononanoate: step 2/2. Functionally, catalyzes the conversion of dethiobiotin (DTB) to biotin by the insertion of a sulfur atom into dethiobiotin via a radical-based mechanism. The chain is Biotin synthase from Nitrosococcus oceani (strain ATCC 19707 / BCRC 17464 / JCM 30415 / NCIMB 11848 / C-107).